Consider the following 310-residue polypeptide: ADP-L-glycero-D-manno-heptose-6-epimerase (310 aa).

NADP(+) contacts are provided by residues 10-11 (FI), 31-32 (DN), K38, K53, 75-79 (EGACS), and N92. Y140 functions as the Proton acceptor in the catalytic mechanism. Position 144 (K144) interacts with NADP(+). N169 is a substrate binding site. NADP(+) is bound by residues V170 and K178. Residue K178 is the Proton acceptor of the active site. Substrate contacts are provided by residues S180, H187, 201–204 (FEGS), and R209. K267 is subject to N6-acetyllysine. Substrate is bound at residue Y272.

It belongs to the NAD(P)-dependent epimerase/dehydratase family. HldD subfamily. Homopentamer. NADP(+) serves as cofactor.

The catalysed reaction is ADP-D-glycero-beta-D-manno-heptose = ADP-L-glycero-beta-D-manno-heptose. Its pathway is nucleotide-sugar biosynthesis; ADP-L-glycero-beta-D-manno-heptose biosynthesis; ADP-L-glycero-beta-D-manno-heptose from D-glycero-beta-D-manno-heptose 7-phosphate: step 4/4. In terms of biological role, catalyzes the interconversion between ADP-D-glycero-beta-D-manno-heptose and ADP-L-glycero-beta-D-manno-heptose via an epimerization at carbon 6 of the heptose. The chain is ADP-L-glycero-D-manno-heptose-6-epimerase from Escherichia coli (strain ATCC 8739 / DSM 1576 / NBRC 3972 / NCIMB 8545 / WDCM 00012 / Crooks).